Here is a 213-residue protein sequence, read N- to C-terminus: Na(+)-translocating NADH-quinone reductase subunit D (213 aa).

A run of 6 helical transmembrane segments spans residues 21 to 41, 42 to 62, 69 to 86, 101 to 121, 131 to 151, and 183 to 203; these read PLIA…VNTA, ITMG…VSLL, SVRM…VIVI, LSVF…AESL, FLDG…VSIV, and FGLM…IWGV.

This sequence belongs to the NqrDE/RnfAE family. In terms of assembly, composed of six subunits; NqrA, NqrB, NqrC, NqrD, NqrE and NqrF.

Its subcellular location is the cell inner membrane. The enzyme catalyses a ubiquinone + n Na(+)(in) + NADH + H(+) = a ubiquinol + n Na(+)(out) + NAD(+). Its function is as follows. NQR complex catalyzes the reduction of ubiquinone-1 to ubiquinol by two successive reactions, coupled with the transport of Na(+) ions from the cytoplasm to the periplasm. NqrA to NqrE are probably involved in the second step, the conversion of ubisemiquinone to ubiquinol. The protein is Na(+)-translocating NADH-quinone reductase subunit D of Chlamydia caviae (strain ATCC VR-813 / DSM 19441 / 03DC25 / GPIC) (Chlamydophila caviae).